The sequence spans 204 residues: Large ribosomal subunit protein uL22c (204 aa).

Belongs to the universal ribosomal protein uL22 family. Part of the 50S ribosomal subunit.

Its subcellular location is the plastid. The protein resides in the chloroplast. Functionally, this protein binds specifically to 23S rRNA. In terms of biological role, the globular domain of the protein is located near the polypeptide exit tunnel on the outside of the subunit, while an extended beta-hairpin is found that lines the wall of the exit tunnel in the center of the 70S ribosome. In Pisum sativum (Garden pea), this protein is Large ribosomal subunit protein uL22c (rpl22).